The following is a 206-amino-acid chain: Superoxide dismutase [Mn] (206 aa).

Residues histidine 27, histidine 82, aspartate 168, and histidine 172 each coordinate Mn(2+).

This sequence belongs to the iron/manganese superoxide dismutase family. Homodimer. Mn(2+) is required as a cofactor.

The enzyme catalyses 2 superoxide + 2 H(+) = H2O2 + O2. In terms of biological role, destroys superoxide anion radicals which are normally produced within the cells and which are toxic to biological systems. The sequence is that of Superoxide dismutase [Mn] (sodA) from Salmonella typhi.